The chain runs to 468 residues: MDTADHHQRYGRVARIRGSVVDVRFERHLPPIHTILETGKDREVKIEVLTQLDDRHIRGIALTGTEGLCRAMAVLDTGMPLRAPVGKQILSRMFDVFGRPIDRGAPPPDVEWRGVHRMPPPLGRRSTRSEVFETGIKIIDLLSPLERGGKAGLFGGAGVGKTVLLTEMIHNMVHRHHGVSIFCGIGERCREGEELYRDMRDAGVLDSMVMVFGQMNEPPGSRFRVGLAALTMAEYFRDDQHEDVLLLIDNIFRFIQAGSEISGMMGQMPSRLGYQPTMGTELSQLEERIANTGTGAITSIQAVYVPADDFTDPAAVHTFSHLSASLTLSRKRAGEGFFPAIDPLQSGSKMTAPSIIGRRHYDLSRQIRRVLAQYSELKDIIAMLGLEQLSAEDRKLVARARRLERFLTQPFFTTEQFTGIEGRMVSLNDTIDGCERILRDEFADYPESSLYMIGTVAEARKNNAVHAP.

An ATP-binding site is contributed by 155–162 (GGAGVGKT).

Belongs to the ATPase alpha/beta chains family. F-type ATPases have 2 components, CF(1) - the catalytic core - and CF(0) - the membrane proton channel. CF(1) has five subunits: alpha(3), beta(3), gamma(1), delta(1), epsilon(1). CF(0) has four main subunits: a(1), b(1), b'(1) and c(9-12).

It is found in the cell inner membrane. It carries out the reaction ATP + H2O + 4 H(+)(in) = ADP + phosphate + 5 H(+)(out). Its function is as follows. Produces ATP from ADP in the presence of a proton gradient across the membrane. The catalytic sites are hosted primarily by the beta subunits. The chain is ATP synthase subunit beta 2 from Chlorobium luteolum (strain DSM 273 / BCRC 81028 / 2530) (Pelodictyon luteolum).